The primary structure comprises 623 residues: Kelch repeat and BTB domain-containing protein 11 (623 aa).

A disordered region spans residues 1-129 (MEHAVAPCVL…PEEPGEPAPV (129 aa)). The segment covering 12 to 31 (PGTEPGAAGESESEGAASPA) has biased composition (low complexity). The span at 42 to 55 (CFSSGEESPPQSLA) shows a compositional bias: polar residues. Residues S64, S67, S87, and S107 each carry the phosphoserine modification. Low complexity predominate over residues 79 to 91 (EAGSAGAASPEEL). The BTB domain maps to 140-196 (PDLVLEVSGRRLRAHKAVLAARSDYFRARASRDVLRVQGVSLTALRLLLADAYSGRM). Kelch repeat units follow at residues 311–359 (RPQS…VLYN), 360–412 (YLFV…ALDG), 413–455 (HLYA…ATTC), and 458–500 (EIYV…ALDG).

This Homo sapiens (Human) protein is Kelch repeat and BTB domain-containing protein 11 (KBTBD11).